Here is a 243-residue protein sequence, read N- to C-terminus: NH(3)-dependent NAD(+) synthetase (243 aa).

31–38 (GVSGGIDS) provides a ligand contact to ATP. Asp37 serves as a coordination point for Mg(2+). Arg110 lines the deamido-NAD(+) pocket. Thr130 contributes to the ATP binding site. Glu135 provides a ligand contact to Mg(2+). 2 residues coordinate deamido-NAD(+): Lys143 and Asp150. Lys159 and Ser181 together coordinate ATP. 227–228 (HK) lines the deamido-NAD(+) pocket.

It belongs to the NAD synthetase family. Homodimer.

The enzyme catalyses deamido-NAD(+) + NH4(+) + ATP = AMP + diphosphate + NAD(+) + H(+). Its pathway is cofactor biosynthesis; NAD(+) biosynthesis; NAD(+) from deamido-NAD(+) (ammonia route): step 1/1. Its function is as follows. Catalyzes the ATP-dependent amidation of deamido-NAD to form NAD. Uses ammonia as a nitrogen source. This chain is NH(3)-dependent NAD(+) synthetase, found in Malacoplasma penetrans (strain HF-2) (Mycoplasma penetrans).